We begin with the raw amino-acid sequence, 249 residues long: uncharacterized protein (249 aa).

This sequence belongs to the HAD-like hydrolase superfamily. CbbY/CbbZ/Gph/YieH family.

This is an uncharacterized protein from Schizosaccharomyces pombe (strain 972 / ATCC 24843) (Fission yeast).